We begin with the raw amino-acid sequence, 161 residues long: Protein-export protein SecB (161 aa).

The protein belongs to the SecB family. In terms of assembly, homotetramer, a dimer of dimers. One homotetramer interacts with 1 SecA dimer.

Its subcellular location is the cytoplasm. In terms of biological role, one of the proteins required for the normal export of preproteins out of the cell cytoplasm. It is a molecular chaperone that binds to a subset of precursor proteins, maintaining them in a translocation-competent state. It also specifically binds to its receptor SecA. This chain is Protein-export protein SecB, found in Shewanella sp. (strain ANA-3).